A 587-amino-acid chain; its full sequence is MDGESIKPSSQPLIQTGDDEKNQRTITVNPAHMGKAFKVMNELRSKQLLCDVMIVAEDVEIEAHRVVLAACSPYFCAMFTGDMSESKAKKIEIKDVDGQTLSKLIDYIYTAEIEVTEENVQVLLPAASLLQLMDVRQNCCDFLQSQLHPTNCLGIRAFADVHTCTDLLQQANAYAEQHFPEVMLGEEFLSLSLDQVCSLISSDKLTVSSEEKVFEAVISWINYEKETRLEHMAKLMEHVRLPLLPRDYLVQTVEEEALIKNNNTCKDFLIEAMKYHLLPLDQRLLIKNPRTKPRTPVSLPKVMIVVGGQAPKAIRSVECYDFEEDRWDQIAELPSRRCRAGVVFMAGHVYAVGGFNGSLRVRTVDVYDGVKDQWTSIASMQERRSTLGAAVLNDLLYAVGGFDGSTGLASVEAYSYKTNEWFFVAPMNTRRSSVGVGVVEGKLYAVGGYDGASRQCLSTVEQYNPATNEWTYVADMSTRRSGAGVGVLSGQLYATGGHDGPLVRKSVEVYDPGTNTWKQVADMNMCRRNAGVCAVNGLLYVVGGDDGSCNLASVEYYNPVTDKWTLLPTNMSTGRSYAGVAVIHKPL.

The tract at residues 1 to 22 (MDGESIKPSSQPLIQTGDDEKN) is disordered. Ser10 is modified (phosphoserine). One can recognise a BTB domain in the interval 50-117 (CDVMIVAEDV…IYTAEIEVTE (68 aa)). A BACK domain is found at 152-254 (CLGIRAFADV…PRDYLVQTVE (103 aa)). Thr295 carries the phosphothreonine modification. Kelch repeat units follow at residues 302 to 347 (VMIV…FMAG), 348 to 394 (HVYA…VLND), 396 to 441 (LYAV…VVEG), 442 to 490 (KLYA…VLSG), 491 to 537 (QLYA…AVNG), and 539 to 585 (LYVV…VIHK). Thr375 carries the post-translational modification Phosphothreonine. 2 positions are modified to phosphoserine: Ser376 and Ser433.

It belongs to the KLHL3 family. Homodimer. Component of the BCR(KLHL3) E3 ubiquitin ligase complex, at least composed of CUL3 and KLHL3 and RBX1. Interacts with CLDN8. In terms of processing, phosphorylation at Ser-433 by PKA or PKC decreases the interaction with WNK1 and WNK4, leading to inhibit their degradation by the BCR(KLHL3) complex. Phosphorylated at Ser-433 by PKC in response to angiotensin II signaling, decreasing ability to promote degradation of WNK1 and WNK4, leading to activation of Na-Cl cotransporter SLC12A3/NCC. Phosphorylation at Ser-433 is increased by insulin. Dephosphorylated at Ser-433 by calcineurin PPP3CA, promoting degradation of WNK1 and WNK4.

Its subcellular location is the cytoplasm. It is found in the cytoskeleton. The protein localises to the cytosol. It functions in the pathway protein modification; protein ubiquitination. Functionally, substrate-specific adapter of a BCR (BTB-CUL3-RBX1) E3 ubiquitin ligase complex that acts as a regulator of ion transport in the distal nephron. The BCR(KLHL3) complex acts by mediating ubiquitination and degradation of WNK1 and WNK4, two activators of Na-Cl cotransporter SLC12A3/NCC in distal convoluted tubule cells of kidney, thereby regulating NaCl reabsorption. The BCR(KLHL3) complex also mediates ubiquitination and degradation of WNK3. The BCR(KLHL3) complex also mediates ubiquitination of CLDN8, a tight-junction protein required for paracellular chloride transport in the kidney, leading to its degradation. The sequence is that of Kelch-like protein 3 (KLHL3) from Bos taurus (Bovine).